A 243-amino-acid polypeptide reads, in one-letter code: 1-(5-phosphoribosyl)-5-[(5-phosphoribosylamino)methylideneamino] imidazole-4-carboxamide isomerase (243 aa).

The active-site Proton acceptor is Asp-8. The active-site Proton donor is the Asp-130.

Belongs to the HisA/HisF family.

The protein localises to the cytoplasm. It carries out the reaction 1-(5-phospho-beta-D-ribosyl)-5-[(5-phospho-beta-D-ribosylamino)methylideneamino]imidazole-4-carboxamide = 5-[(5-phospho-1-deoxy-D-ribulos-1-ylimino)methylamino]-1-(5-phospho-beta-D-ribosyl)imidazole-4-carboxamide. It participates in amino-acid biosynthesis; L-histidine biosynthesis; L-histidine from 5-phospho-alpha-D-ribose 1-diphosphate: step 4/9. The sequence is that of 1-(5-phosphoribosyl)-5-[(5-phosphoribosylamino)methylideneamino] imidazole-4-carboxamide isomerase from Vesicomyosocius okutanii subsp. Calyptogena okutanii (strain HA).